Here is a 390-residue protein sequence, read N- to C-terminus: 1-deoxy-D-xylulose 5-phosphate reductoisomerase (390 aa).

NADPH-binding residues include T10, G11, S12, I13, A36, K37, N38, and N122. K123 serves as a coordination point for 1-deoxy-D-xylulose 5-phosphate. Residue E124 participates in NADPH binding. D148 is a Mn(2+) binding site. Residues S149, E150, S174, and H197 each coordinate 1-deoxy-D-xylulose 5-phosphate. Mn(2+) is bound at residue E150. G203 serves as a coordination point for NADPH. 1-deoxy-D-xylulose 5-phosphate contacts are provided by S210, N215, K216, and E219. Residue E219 participates in Mn(2+) binding.

The protein belongs to the DXR family. The cofactor is Mg(2+). It depends on Mn(2+) as a cofactor.

The enzyme catalyses 2-C-methyl-D-erythritol 4-phosphate + NADP(+) = 1-deoxy-D-xylulose 5-phosphate + NADPH + H(+). The protein operates within isoprenoid biosynthesis; isopentenyl diphosphate biosynthesis via DXP pathway; isopentenyl diphosphate from 1-deoxy-D-xylulose 5-phosphate: step 1/6. Catalyzes the NADPH-dependent rearrangement and reduction of 1-deoxy-D-xylulose-5-phosphate (DXP) to 2-C-methyl-D-erythritol 4-phosphate (MEP). The chain is 1-deoxy-D-xylulose 5-phosphate reductoisomerase from Trichlorobacter lovleyi (strain ATCC BAA-1151 / DSM 17278 / SZ) (Geobacter lovleyi).